Reading from the N-terminus, the 216-residue chain is Nucleoside triphosphate pyrophosphatase (216 aa).

Asp-82 acts as the Proton acceptor in catalysis.

Belongs to the Maf family. It depends on a divalent metal cation as a cofactor.

Its subcellular location is the cytoplasm. It carries out the reaction a ribonucleoside 5'-triphosphate + H2O = a ribonucleoside 5'-phosphate + diphosphate + H(+). It catalyses the reaction a 2'-deoxyribonucleoside 5'-triphosphate + H2O = a 2'-deoxyribonucleoside 5'-phosphate + diphosphate + H(+). Its function is as follows. Nucleoside triphosphate pyrophosphatase. May have a dual role in cell division arrest and in preventing the incorporation of modified nucleotides into cellular nucleic acids. In Mycobacterium marinum (strain ATCC BAA-535 / M), this protein is Nucleoside triphosphate pyrophosphatase.